The primary structure comprises 110 residues: DNA-binding protein Tneu_1679 (110 aa).

Belongs to the PDCD5 family.

This Pyrobaculum neutrophilum (strain DSM 2338 / JCM 9278 / NBRC 100436 / V24Sta) (Thermoproteus neutrophilus) protein is DNA-binding protein Tneu_1679.